The chain runs to 178 residues: Gamma-crystallin M1 (178 aa).

Beta/gamma crystallin 'Greek key' domains are found at residues 2-40 and 41-86; these read GKII…RVES and GCFM…RMIP. The tract at residues 87–91 is connecting peptide; the sequence is PYRGS. 2 Beta/gamma crystallin 'Greek key' domains span residues 92-132 and 133-175; these read YRMR…HVMD and GHWL…RRIT.

Belongs to the beta/gamma-crystallin family. Monomer.

Its function is as follows. Crystallins are the dominant structural components of the vertebrate eye lens. The polypeptide is Gamma-crystallin M1 (Cyprinus carpio (Common carp)).